Here is a 164-residue protein sequence, read N- to C-terminus: Protein-export protein SecB (164 aa).

It belongs to the SecB family. In terms of assembly, homotetramer, a dimer of dimers. One homotetramer interacts with 1 SecA dimer.

The protein resides in the cytoplasm. Functionally, one of the proteins required for the normal export of preproteins out of the cell cytoplasm. It is a molecular chaperone that binds to a subset of precursor proteins, maintaining them in a translocation-competent state. It also specifically binds to its receptor SecA. This is Protein-export protein SecB from Pseudomonas syringae pv. tomato (strain ATCC BAA-871 / DC3000).